A 158-amino-acid polypeptide reads, in one-letter code: Pyruvoyl-dependent arginine decarboxylase (158 aa).

The residue at position 44 (Ser44) is a Pyruvic acid (Ser).

It belongs to the PdaD family. The cofactor is pyruvate.

The enzyme catalyses L-arginine + H(+) = agmatine + CO2. This Pyrococcus horikoshii (strain ATCC 700860 / DSM 12428 / JCM 9974 / NBRC 100139 / OT-3) protein is Pyruvoyl-dependent arginine decarboxylase.